A 201-amino-acid polypeptide reads, in one-letter code: MARYTGPSTRIARKFGEAIFGDDKSFEKRNYPPGQHGMAKKRGKKSEFAIQLMEKQKAKYSYGILEKQFRGLFKKAAASKGVTGEILLQLCEARLDNVVYRMGIAPTRRAARQIVSHRHVTVNGELVNVPSYHLKPGDKVAVREKSKSLEAIDRSLSNSSHVYEWITWNTAQMEGTFVSVPARLQIPENIKEQLIVELYNK.

The S4 RNA-binding domain occupies 93–153 (ARLDNVVYRM…EKSKSLEAID (61 aa)).

This sequence belongs to the universal ribosomal protein uS4 family. Part of the 30S ribosomal subunit. Contacts protein S5. The interaction surface between S4 and S5 is involved in control of translational fidelity.

Functionally, one of the primary rRNA binding proteins, it binds directly to 16S rRNA where it nucleates assembly of the body of the 30S subunit. In terms of biological role, with S5 and S12 plays an important role in translational accuracy. The sequence is that of Small ribosomal subunit protein uS4 from Flavobacterium psychrophilum (strain ATCC 49511 / DSM 21280 / CIP 103535 / JIP02/86).